Here is a 274-residue protein sequence, read N- to C-terminus: uncharacterized protein (274 aa).

The span at 1–17 (MTQLTNFSESFSNQNSN) shows a compositional bias: low complexity. Disordered stretches follow at residues 1–38 (MTQLTNFSESFSNQNSNLHQPYNFNSHQPPEENHYYVR) and 222–274 (ELGT…MEFE). The segment covering 18–28 (LHQPYNFNSHQ) has biased composition (polar residues). The span at 29 to 38 (PPEENHYYVR) shows a compositional bias: basic and acidic residues. Composition is skewed to polar residues over residues 239 to 249 (PMASPTGSSQI) and 256 to 265 (SPNSLTNGSV).

This is an uncharacterized protein from Caenorhabditis elegans.